The primary structure comprises 101 residues: Small ribosomal subunit protein uS10 (101 aa).

Belongs to the universal ribosomal protein uS10 family. In terms of assembly, part of the 30S ribosomal subunit.

In terms of biological role, involved in the binding of tRNA to the ribosomes. In Brachyspira pilosicoli (Serpulina pilosicoli), this protein is Small ribosomal subunit protein uS10.